Here is a 264-residue protein sequence, read N- to C-terminus: Undecaprenyl-diphosphatase (264 aa).

8 helical membrane-spanning segments follow: residues 7–27, 39–59, 89–109, 112–132, 145–165, 182–202, 212–232, and 244–264; these read VVIL…SSGH, LPIV…MIYY, ILLI…IEMF, LFTL…LFLL, ILLA…PGIS, SESF…SLLL, MLFS…VGLF, and SKLY…YFLF.

It belongs to the UppP family.

Its subcellular location is the cell inner membrane. The enzyme catalyses di-trans,octa-cis-undecaprenyl diphosphate + H2O = di-trans,octa-cis-undecaprenyl phosphate + phosphate + H(+). Its function is as follows. Catalyzes the dephosphorylation of undecaprenyl diphosphate (UPP). Confers resistance to bacitracin. The protein is Undecaprenyl-diphosphatase of Borrelia hermsii (strain HS1 / DAH).